Here is a 212-residue protein sequence, read N- to C-terminus: Imidazole glycerol phosphate synthase subunit HisH (212 aa).

A Glutamine amidotransferase type-1 domain is found at 2-212; that stretch reads QTAIIDYGMG…LTMLKNFLNW (211 aa). Cysteine 85 serves as the catalytic Nucleophile. Residues histidine 194 and glutamate 196 contribute to the active site.

Heterodimer of HisH and HisF.

It is found in the cytoplasm. It carries out the reaction 5-[(5-phospho-1-deoxy-D-ribulos-1-ylimino)methylamino]-1-(5-phospho-beta-D-ribosyl)imidazole-4-carboxamide + L-glutamine = D-erythro-1-(imidazol-4-yl)glycerol 3-phosphate + 5-amino-1-(5-phospho-beta-D-ribosyl)imidazole-4-carboxamide + L-glutamate + H(+). The enzyme catalyses L-glutamine + H2O = L-glutamate + NH4(+). The protein operates within amino-acid biosynthesis; L-histidine biosynthesis; L-histidine from 5-phospho-alpha-D-ribose 1-diphosphate: step 5/9. IGPS catalyzes the conversion of PRFAR and glutamine to IGP, AICAR and glutamate. The HisH subunit catalyzes the hydrolysis of glutamine to glutamate and ammonia as part of the synthesis of IGP and AICAR. The resulting ammonia molecule is channeled to the active site of HisF. The protein is Imidazole glycerol phosphate synthase subunit HisH of Neisseria gonorrhoeae (strain ATCC 700825 / FA 1090).